The sequence spans 228 residues: NAD(P)H-hydrate epimerase (228 aa).

In terms of domain architecture, YjeF N-terminal spans 9–209 (VRAVERLAHR…LLGLTPAFLA (201 aa)). 53 to 57 (NNGGD) is a (6S)-NADPHX binding site. 2 residues coordinate K(+): asparagine 54 and aspartate 115. Residues 119–125 (GIGLARP) and aspartate 148 contribute to the (6S)-NADPHX site. Position 151 (serine 151) interacts with K(+).

The protein belongs to the NnrE/AIBP family. It depends on K(+) as a cofactor.

It catalyses the reaction (6R)-NADHX = (6S)-NADHX. The enzyme catalyses (6R)-NADPHX = (6S)-NADPHX. In terms of biological role, catalyzes the epimerization of the S- and R-forms of NAD(P)HX, a damaged form of NAD(P)H that is a result of enzymatic or heat-dependent hydration. This is a prerequisite for the S-specific NAD(P)H-hydrate dehydratase to allow the repair of both epimers of NAD(P)HX. This chain is NAD(P)H-hydrate epimerase, found in Bordetella pertussis (strain CS).